We begin with the raw amino-acid sequence, 276 residues long: Large ribosomal subunit protein uL2 (276 aa).

Disordered stretches follow at residues 1–50 and 206–276; these read MPIK…GRVT and GKAG…SKKR. Residues 7 to 19 are compositionally biased toward polar residues; it reads RPTTPTRRFQTVV. Residues 20–38 are compositionally biased toward basic and acidic residues; sequence SREDITKQTPEKSLVESKK.

It belongs to the universal ribosomal protein uL2 family. Part of the 50S ribosomal subunit. Forms a bridge to the 30S subunit in the 70S ribosome.

One of the primary rRNA binding proteins. Required for association of the 30S and 50S subunits to form the 70S ribosome, for tRNA binding and peptide bond formation. It has been suggested to have peptidyltransferase activity; this is somewhat controversial. Makes several contacts with the 16S rRNA in the 70S ribosome. This Solibacter usitatus (strain Ellin6076) protein is Large ribosomal subunit protein uL2.